A 596-amino-acid polypeptide reads, in one-letter code: Putative terpene synthase 3, chloroplastic (596 aa).

The transit peptide at 1–46 directs the protein to the chloroplast; that stretch reads MATLSMQVSTLSKQVKNLNTFGMGSASKLPMVARRVSTIRLRPICS. Positions 349 and 353 each coordinate Mn(2+). The DDXXD motif motif lies at 349–353; the sequence is DDVYD. Homodimerization regions lie at residues 355–361 and 427–464; these read YGTLDEL and EAKW…FTLP. The Mn(2+) site is built by Asp493 and Glu501.

Belongs to the terpene synthase family. As to quaternary structure, homodimer. Mn(2+) is required as a cofactor. The cofactor is Mg(2+).

Its subcellular location is the plastid. It localises to the chloroplast. The protein operates within secondary metabolite biosynthesis; terpenoid biosynthesis. In terms of biological role, putative monoterpene synthase. This is Putative terpene synthase 3, chloroplastic from Thymus vulgaris (Thyme).